The sequence spans 507 residues: ATP synthase subunit alpha (507 aa).

Position 169–176 (G169–T176) interacts with ATP.

Belongs to the ATPase alpha/beta chains family. F-type ATPases have 2 components, CF(1) - the catalytic core - and CF(0) - the membrane proton channel. CF(1) has five subunits: alpha(3), beta(3), gamma(1), delta(1), epsilon(1). CF(0) has three main subunits: a(1), b(2) and c(9-12). The alpha and beta chains form an alternating ring which encloses part of the gamma chain. CF(1) is attached to CF(0) by a central stalk formed by the gamma and epsilon chains, while a peripheral stalk is formed by the delta and b chains.

It localises to the cell inner membrane. It catalyses the reaction ATP + H2O + 4 H(+)(in) = ADP + phosphate + 5 H(+)(out). Functionally, produces ATP from ADP in the presence of a proton gradient across the membrane. The alpha chain is a regulatory subunit. The sequence is that of ATP synthase subunit alpha from Magnetococcus marinus (strain ATCC BAA-1437 / JCM 17883 / MC-1).